The following is an 815-amino-acid chain: (-)-kolavenyl diphosphate synthase TPS28, chloroplastic (815 aa).

A chloroplast-targeting transit peptide spans 1–51; it reads MFMSSSSSSHARRPQLSSFSYLHPPLPFPGLSFFNTRDKRVNFDSTRIICI. K247 is a binding site for substrate. D379 and D381 together coordinate Mg(2+). The DXDD motif signature appears at 379 to 382; it reads DIDD. Substrate is bound at residue K465.

The protein belongs to the terpene synthase family. Tpsc subfamily. Mg(2+) is required as a cofactor.

The protein resides in the plastid. Its subcellular location is the chloroplast. It catalyses the reaction (2E,6E,10E)-geranylgeranyl diphosphate = (-)-kolavenyl diphosphate. Its activity is regulated as follows. Inhibited by high concentrations of magnesium. Diterpene synthase that catalyzes the formation of (-)-kolavenyl diphosphate from geranylgeranyl diphosphate (GGPP). The sequence is that of (-)-kolavenyl diphosphate synthase TPS28, chloroplastic from Tripterygium wilfordii (Thunder God vine).